Here is a 788-residue protein sequence, read N- to C-terminus: Multifunctional tryptophan biosynthesis protein (788 aa).

A Glutamine amidotransferase type-1 domain is found at Asp12 to Glu207. Gly63 to Gly65 contacts L-glutamine. The active-site Nucleophile; for GATase activity is the Cys91. An L-glutamine-binding site is contributed by Ser141–Leu142. Residues His181 and Glu183 each act as for GATase activity in the active site. The segment at Ile238–Leu503 is indole-3-glycerol phosphate synthase. Residues Leu520–Leu788 are N-(5'-phosphoribosyl)anthranilate isomerase.

It carries out the reaction N-(5-phospho-beta-D-ribosyl)anthranilate = 1-(2-carboxyphenylamino)-1-deoxy-D-ribulose 5-phosphate. The catalysed reaction is 1-(2-carboxyphenylamino)-1-deoxy-D-ribulose 5-phosphate + H(+) = (1S,2R)-1-C-(indol-3-yl)glycerol 3-phosphate + CO2 + H2O. It catalyses the reaction chorismate + L-glutamine = anthranilate + pyruvate + L-glutamate + H(+). Its pathway is amino-acid biosynthesis; L-tryptophan biosynthesis; L-tryptophan from chorismate: step 1/5. The protein operates within amino-acid biosynthesis; L-tryptophan biosynthesis; L-tryptophan from chorismate: step 3/5. It functions in the pathway amino-acid biosynthesis; L-tryptophan biosynthesis; L-tryptophan from chorismate: step 4/5. In terms of biological role, trifunctional enzyme bearing the Gln amidotransferase (GATase) domain of anthranilate synthase, indole-glycerolphosphate synthase, and phosphoribosylanthranilate isomerase activities. In Phanerodontia chrysosporium (White-rot fungus), this protein is Multifunctional tryptophan biosynthesis protein (TRPC).